The following is a 332-amino-acid chain: MKVTFEQLKAAFNRVLISRGVDSETADACAEMFARTTESGVYSHGVNRFPRFIQQLDNGDIIPDAEAKRITTLGAIEQWDAQRSIGNLTAKKMMDRAIELAADHGIGLVALRNANHWMRGGSYGWQAAEKGYIGICWTNSIAVMPPWGAKECRIGTNPLIVAIPSTPITMVDMSMSMFSYGMLEVNRLAGRQLPVDGGFDDEGNLTKEPGVIEKNRRILPMGYWKGSGMSIVLDMIATLLSDGASVAEVTQDNSDEYGVSQIFIAIEVDKLIDGATRDAKLQRIMDYITTAERADENQAIRLPGHEFTTLLAENRRNGITVDDSVWAKIQAL.

The Proton donor role is filled by histidine 44. NAD(+) contacts are provided by residues isoleucine 168–serine 174, tryptophan 224–lysine 225, and glycine 304–glutamate 306.

Belongs to the LDH2/MDH2 oxidoreductase family. DlgD subfamily. In terms of assembly, homodimer.

The protein localises to the cytoplasm. It catalyses the reaction 3-dehydro-L-gulonate + NAD(+) = 2,3-dioxo-L-gulonate + NADH + H(+). It carries out the reaction 3-dehydro-L-gulonate + NADP(+) = 2,3-dioxo-L-gulonate + NADPH + H(+). In terms of biological role, catalyzes the reduction of 2,3-diketo-L-gulonate in the presence of NADH, to form 3-keto-L-gulonate. The sequence is that of 2,3-diketo-L-gulonate reductase from Escherichia coli O17:K52:H18 (strain UMN026 / ExPEC).